The primary structure comprises 391 residues: ATP phosphoribosyltransferase regulatory subunit (391 aa).

Belongs to the class-II aminoacyl-tRNA synthetase family. HisZ subfamily. Heteromultimer composed of HisG and HisZ subunits.

The protein localises to the cytoplasm. It functions in the pathway amino-acid biosynthesis; L-histidine biosynthesis; L-histidine from 5-phospho-alpha-D-ribose 1-diphosphate: step 1/9. Functionally, required for the first step of histidine biosynthesis. May allow the feedback regulation of ATP phosphoribosyltransferase activity by histidine. The protein is ATP phosphoribosyltransferase regulatory subunit of Prochlorococcus marinus (strain NATL2A).